The primary structure comprises 541 residues: Threonine--tRNA ligase catalytic subunit (541 aa).

The segment at 135–429 (DHRIIGERMD…LLEHFRGKLP (295 aa)) is catalytic. C227, H278, and H406 together coordinate Zn(2+).

This sequence belongs to the class-II aminoacyl-tRNA synthetase family. Homodimer. Probably interacts with its editing subunit. Requires Zn(2+) as cofactor.

Its subcellular location is the cytoplasm. It carries out the reaction tRNA(Thr) + L-threonine + ATP = L-threonyl-tRNA(Thr) + AMP + diphosphate + H(+). Functionally, catalyzes the attachment of threonine to tRNA(Thr) in a two-step reaction: L-threonine is first activated by ATP to form Thr-AMP and then transferred to the acceptor end of tRNA(Thr). Also activates L-serine and transfers it to tRNA(Thr) but cannot deacylate incorrectly charged amino acid; unlike most archaea the editing function is found in a freestanding protein. The protein is Threonine--tRNA ligase catalytic subunit of Metallosphaera sedula (strain ATCC 51363 / DSM 5348 / JCM 9185 / NBRC 15509 / TH2).